Consider the following 372-residue polypeptide: Innexin shaking-B (372 aa).

The Cytoplasmic segment spans residues 1-21 (MLDIFRGLKNLVKVSHVKTDS). A helical membrane pass occupies residues 22–42 (IVFRLHYSITVMILMSFSLII). The Extracellular portion of the chain corresponds to 43–110 (TTRQYVGNPI…PADKKHYKYY (68 aa)). The chain crosses the membrane as a helical span at residues 111 to 131 (QWVCFCLFFQAILFYTPRWLW). Topologically, residues 132–182 (KSWEGGKIHALIMDLDIGICSEAEKKQKKKLLLDYLWENLRYHNWWAYRYY) are cytoplasmic. The helical transmembrane segment at 183 to 203 (VCELLALINVIGQMFLMNRFF) threads the bilayer. Residues 204–267 (DGEFITFGLK…ILPLNVVNEK (64 aa)) lie on the Extracellular side of the membrane. A helical transmembrane segment spans residues 268 to 288 (IYIFLWFWFILLTFLTLLTLI). The Cytoplasmic segment spans residues 289-372 (YRVVIIFSPR…PGLKGEIQDA (84 aa)).

The protein belongs to the pannexin family. As to quaternary structure, monomer (isoform Lethal). In terms of tissue distribution, isoform Neural is expressed in synapses of giant fibers (GF), in a large thoracic cell in location of postsynaptic target and optic lobe lamina and medulla. Isoform Lethal is expressed in embryonic mesodermal derivatives. During metamorphosis, both isoforms are dynamically expressed in pupal nervous system.

It localises to the cell membrane. The protein resides in the cell junction. Its subcellular location is the gap junction. Functionally, structural component of the gap junctions at electrical synapses in distal and mid-depth levels in the lamina. Isoform Lethal forms voltage sensitive intercellular channels through homotypic interactions. The protein is Innexin shaking-B (shakB) of Drosophila melanogaster (Fruit fly).